We begin with the raw amino-acid sequence, 334 residues long: MGRSPISDDSGLKKGPWTPDEDEKLVNYVQKHGHSSWRALPKLAGLNRCGKSCRLRWTNYLRPDIKRGRFSPDEEQTILNLHSVLGNKWSTIANQLPGRTDNEIKNFWNTHLKKKLIQMGFDPMTHRPRTDIFSGLSQLMSLSSNLRGFVDLQQQFPIDQEHTILKLQTEMAKLQLFQYLLQPSSMSNNVNPNDFDTLSLLNSIASFKETSNNTTSNNLDLGFLGSYLQDFHSLPSLKTLNSNMEPSSVFPQNLDDNHFKFSTQRENLPVSPIWLSDPSSTTPAHVNDDLIFNQYGIEDVNSNITSSSGQESGASASAAWPDHLLDDSIFSDIP.

HTH myb-type domains lie at 9–61 (DSGL…TNYL) and 62–116 (RPDI…KKKL). 2 DNA-binding regions (H-T-H motif) span residues 37 to 61 (WRAL…TNYL) and 89 to 112 (WSTI…NTHL).

In terms of assembly, interacts with FBX5. Highly expressed in roots and at lower levels in stems, flowers and siliques.

Its subcellular location is the nucleus. Its function is as follows. Probable transcription factor. The chain is Transcription factor MYB92 from Arabidopsis thaliana (Mouse-ear cress).